Consider the following 510-residue polypeptide: MAFNFGAPSGTSGTSTATAAPAGGFGGFGTTTTTAGSAFSFSAPTNTGSTGLLGGTQNKGFGFGTGFGTSTGTGTGLGTGLGTGLGFGGFNTQQQQQQQQTSLGGLFSQPAQAPAQSNQLINTASALSAPTLLGDERDAILAKWNQLQAFWGTGKGYFNNNIPPVEFTQENPFCRFKAVGYSCMPNNKDEDGLVVLIFNKKETDIRSQQQQLVESLHKVLGGNQTLTVNVEGIKTLPDDQTEVVIYIVERSPNGTSRRVPATTLYAHFEQANIKTQLQQLGVTLSMTRTELSPAQIKQLLQNPPAGVDPIIWEQAKVDNPDSEKLIPVPMVGFKELLRRLKVQDQMTKQHQTRLDIISEDISELQKNQTTTMAKIAQYKRKLMDLSHRTLQVLIKQEIQRKSGYAIQAEEEQLRVQLDTIQGELNAPTQFKGRLNELMSQIRMQNHFGAVKSEEKYYIDADLLREIKQHLKQQQEGLSHLISIIKDDLEDIKLVEHGLNETIHSRGGVFS.

Tandem repeats lie at residues 5-6 (FG), 25-26 (FG), 28-29 (FG), 61-62 (FG), 63-64 (FG), 67-68 (FG), 87-88 (FG), and 447-448 (FG). The 8 X 2 AA repeats of F-G stretch occupies residues 5 to 448 (FGAPSGTSGT…SQIRMQNHFG (444 aa)).

This sequence belongs to the NUP54 family. Component of the p62 complex, a complex composed of NUP62, NUP54, and the isoform p58 and isoform p45 of NUP58. Interacts with NUTF2. In terms of processing, O-glycosylated.

Its subcellular location is the nucleus. It localises to the nuclear pore complex. It is found in the nucleus membrane. Its function is as follows. Component of the nuclear pore complex, a complex required for the trafficking across the nuclear membrane. The chain is Nuclear pore complex protein Nup54 (Nup54) from Rattus norvegicus (Rat).